The chain runs to 321 residues: Mitochondrial thiamine pyrophosphate carrier 1 (321 aa).

Solcar repeat units follow at residues 12-110 (GSRQ…ISQM), 121-207 (PSSA…LKPV), and 216-311 (PLGS…AMGI). Transmembrane regions (helical) follow at residues 17 to 38 (VVVAGAAAGLVSRFVIAPLDVI), 91 to 107 (LLYLTYGSVQFSAYTNI), 127 to 147 (FISGAGAGAAATTVTYPLDLL), 182 to 199 (GLGAGVSQIVPYMGLFFA), 213 to 231 (LPLPLGSSDAVAGVVASVV), and 286 to 303 (GLTVSLLKAAPASAVTMW).

Belongs to the mitochondrial carrier (TC 2.A.29) family.

It localises to the mitochondrion inner membrane. In terms of biological role, mitochondrial transporter that mediates uptake of thiamine pyrophosphate (ThPP) into mitochondria. This is Mitochondrial thiamine pyrophosphate carrier 1 (TPC1) from Phaeosphaeria nodorum (strain SN15 / ATCC MYA-4574 / FGSC 10173) (Glume blotch fungus).